A 905-amino-acid polypeptide reads, in one-letter code: Stonin-2 (905 aa).

Disordered regions lie at residues 1–121 (MTTL…HQET), 178–205 (EQTSGQASGADSTDNSSSLQEDEEVEME), and 244–263 (LPPVTSPLKPNTPPSASVIP). Low complexity predominate over residues 40–50 (SSSPDQSESSS). A compositionally biased stretch (basic and acidic residues) spans 60–73 (SQDHSHSEQDDSSE). The segment covering 85–94 (PGSPEQPPPD) has biased composition (pro residues). A compositionally biased stretch (polar residues) spans 178 to 196 (EQTSGQASGADSTDNSSSL). Pro residues predominate over residues 244 to 256 (LPPVTSPLKPNTP). At Thr255 the chain carries Phosphothreonine. Ser281, Ser287, and Ser302 each carry phosphoserine. 2 short sequence motifs (NPF) span residues 313 to 315 (NPF) and 329 to 331 (NPF). One can recognise an SHD domain in the interval 427–560 (GWPMMLRIPE…DLPVLSMDLS (134 aa)). Positions 568–878 (EEEITVDVRD…SYQVALGSIW (311 aa)) constitute an MHD domain. A Phosphoserine modification is found at Ser762.

This sequence belongs to the Stoned B family. As to quaternary structure, interacts with the second C2 domain of synaptotagmins SYT1 and SYT2. Interacts with EPS15, EPS15R and ITSN1. Interacts indirectly with the AP-2 adapter complex. Interacts with TOR1A and COPS4; the interaction controls STON2 protein stability. Post-translationally, phosphorylated in vitro by PKD. In terms of processing, neddylated; deneddylated via its interaction with the COP9 signalosome (CSN) complex through TOR1A and COPS4. Ubiquitinated; leading to its degradation. Ubiquitous.

The protein localises to the cytoplasm. The protein resides in the membrane. It is found in the synapse. It localises to the synaptosome. Its function is as follows. Adapter protein involved in endocytic machinery. Involved in the synaptic vesicle recycling. May facilitate clathrin-coated vesicle uncoating. This is Stonin-2 (STON2) from Homo sapiens (Human).